We begin with the raw amino-acid sequence, 428 residues long: Dihydroorotase (428 aa).

Zn(2+) is bound by residues H61 and H63. Residues H63–R65 and N95 each bind substrate. Zn(2+)-binding residues include D153, H180, and H233. N279 lines the substrate pocket. D306 is a Zn(2+) binding site. D306 is a catalytic residue. Substrate is bound by residues H310 and F324–G325.

Belongs to the metallo-dependent hydrolases superfamily. DHOase family. Class I DHOase subfamily. The cofactor is Zn(2+).

It carries out the reaction (S)-dihydroorotate + H2O = N-carbamoyl-L-aspartate + H(+). It functions in the pathway pyrimidine metabolism; UMP biosynthesis via de novo pathway; (S)-dihydroorotate from bicarbonate: step 3/3. In terms of biological role, catalyzes the reversible cyclization of carbamoyl aspartate to dihydroorotate. The protein is Dihydroorotase of Geobacillus thermodenitrificans (strain NG80-2).